A 166-amino-acid polypeptide reads, in one-letter code: NADPH-dependent 7-cyano-7-deazaguanine reductase (166 aa).

Cys57 functions as the Thioimide intermediate in the catalytic mechanism. Asp64 (proton donor) is an active-site residue. Substrate is bound by residues 79-81 (VES) and 98-99 (HE).

It belongs to the GTP cyclohydrolase I family. QueF type 1 subfamily.

The protein resides in the cytoplasm. It catalyses the reaction 7-aminomethyl-7-carbaguanine + 2 NADP(+) = 7-cyano-7-deazaguanine + 2 NADPH + 3 H(+). It functions in the pathway tRNA modification; tRNA-queuosine biosynthesis. In terms of biological role, catalyzes the NADPH-dependent reduction of 7-cyano-7-deazaguanine (preQ0) to 7-aminomethyl-7-deazaguanine (preQ1). The sequence is that of NADPH-dependent 7-cyano-7-deazaguanine reductase from Staphylococcus saprophyticus subsp. saprophyticus (strain ATCC 15305 / DSM 20229 / NCIMB 8711 / NCTC 7292 / S-41).